The following is a 102-amino-acid chain: Aspartyl/glutamyl-tRNA(Asn/Gln) amidotransferase subunit C (102 aa).

The protein belongs to the GatC family. Heterotrimer of A, B and C subunits.

The enzyme catalyses L-glutamyl-tRNA(Gln) + L-glutamine + ATP + H2O = L-glutaminyl-tRNA(Gln) + L-glutamate + ADP + phosphate + H(+). It carries out the reaction L-aspartyl-tRNA(Asn) + L-glutamine + ATP + H2O = L-asparaginyl-tRNA(Asn) + L-glutamate + ADP + phosphate + 2 H(+). Its function is as follows. Allows the formation of correctly charged Asn-tRNA(Asn) or Gln-tRNA(Gln) through the transamidation of misacylated Asp-tRNA(Asn) or Glu-tRNA(Gln) in organisms which lack either or both of asparaginyl-tRNA or glutaminyl-tRNA synthetases. The reaction takes place in the presence of glutamine and ATP through an activated phospho-Asp-tRNA(Asn) or phospho-Glu-tRNA(Gln). This is Aspartyl/glutamyl-tRNA(Asn/Gln) amidotransferase subunit C from Mycobacteroides abscessus (strain ATCC 19977 / DSM 44196 / CCUG 20993 / CIP 104536 / JCM 13569 / NCTC 13031 / TMC 1543 / L948) (Mycobacterium abscessus).